We begin with the raw amino-acid sequence, 209 residues long: Peptide methionine sulfoxide reductase MsrA (209 aa).

Residue C51 is part of the active site.

This sequence belongs to the MsrA Met sulfoxide reductase family.

It catalyses the reaction L-methionyl-[protein] + [thioredoxin]-disulfide + H2O = L-methionyl-(S)-S-oxide-[protein] + [thioredoxin]-dithiol. The catalysed reaction is [thioredoxin]-disulfide + L-methionine + H2O = L-methionine (S)-S-oxide + [thioredoxin]-dithiol. Its function is as follows. Has an important function as a repair enzyme for proteins that have been inactivated by oxidation. Catalyzes the reversible oxidation-reduction of methionine sulfoxide in proteins to methionine. This is Peptide methionine sulfoxide reductase MsrA from Vibrio vulnificus (strain CMCP6).